A 142-amino-acid polypeptide reads, in one-letter code: 3-hydroxyacyl-[acyl-carrier-protein] dehydratase FabZ (142 aa).

H50 is an active-site residue.

It belongs to the thioester dehydratase family. FabZ subfamily.

The protein localises to the cytoplasm. The catalysed reaction is a (3R)-hydroxyacyl-[ACP] = a (2E)-enoyl-[ACP] + H2O. Involved in unsaturated fatty acids biosynthesis. Catalyzes the dehydration of short chain beta-hydroxyacyl-ACPs and long chain saturated and unsaturated beta-hydroxyacyl-ACPs. The chain is 3-hydroxyacyl-[acyl-carrier-protein] dehydratase FabZ from Clostridium botulinum (strain Alaska E43 / Type E3).